The following is a 412-amino-acid chain: CapZ-interacting protein (412 aa).

2 disordered regions span residues 1-84 (MEER…KSSP) and 99-412 (ALLP…DTRM). The segment covering 7–20 (ETNSNVDSSAQPSV) has biased composition (polar residues). Ser-68, Ser-82, Ser-83, Ser-105, Ser-108, Ser-116, Ser-120, and Ser-123 each carry phosphoserine. Thr-124 bears the Phosphothreonine mark. Phosphoserine is present on residues Ser-126, Ser-127, Ser-135, and Ser-143. The span at 159-176 (VRTRGSIKRRPPSRRFRR) shows a compositional bias: basic residues. Residues Ser-177, Ser-179, and Ser-216 each carry the phosphoserine modification. Phosphothreonine occurs at positions 243 and 256. Residues 248–258 (EKPEELVRTPE) are compositionally biased toward basic and acidic residues. Position 297 is a phosphoserine (Ser-297). 2 stretches are compositionally biased toward basic and acidic residues: residues 298-312 (PREETTPGEHTDTGK) and 319-330 (SEERVADEDRLG). A phosphoserine mark is found at Ser-333 and Ser-401.

In terms of assembly, interacts with CAPZA2 and CAPZB. In terms of processing, dephosphorylation results in its dissociation from CAPZA2.

In terms of biological role, stress-induced phosphorylation of CAPZIP may regulate the ability of F-actin-capping protein to remodel actin filament assembly. This Mus musculus (Mouse) protein is CapZ-interacting protein (Rcsd1).